A 436-amino-acid polypeptide reads, in one-letter code: Peptidase B (436 aa).

Mn(2+) contacts are provided by Lys-201 and Asp-206. The active site involves Lys-213. Mn(2+) contacts are provided by Asp-224, Asp-283, and Glu-285. Arg-287 is a catalytic residue.

The protein belongs to the peptidase M17 family. In terms of assembly, homohexamer. The cofactor is Mn(2+).

The protein resides in the cytoplasm. The catalysed reaction is Release of an N-terminal amino acid, Xaa, from a peptide or arylamide. Xaa is preferably Glu or Asp but may be other amino acids, including Leu, Met, His, Cys and Gln.. Functionally, probably plays an important role in intracellular peptide degradation. This is Peptidase B from Pectobacterium carotovorum subsp. carotovorum (strain PC1).